The following is a 117-amino-acid chain: MPSCSCALMAPCGPAAGPAAVERTQQVARGEPGSARGQLQVSPEMSITHKEKENAHLKEILLFVNAEAFSQPQPHSAPVCEGQQLTGKFSTSVLTRAGGDASPCSWERLLCYGWSHC.

This is an uncharacterized protein from Homo sapiens (Human).